We begin with the raw amino-acid sequence, 409 residues long: NADH-quinone oxidoreductase subunit D (409 aa).

This sequence belongs to the complex I 49 kDa subunit family. NDH-1 is composed of 14 different subunits. Subunits NuoB, C, D, E, F, and G constitute the peripheral sector of the complex.

It localises to the cell inner membrane. The catalysed reaction is a quinone + NADH + 5 H(+)(in) = a quinol + NAD(+) + 4 H(+)(out). Functionally, NDH-1 shuttles electrons from NADH, via FMN and iron-sulfur (Fe-S) centers, to quinones in the respiratory chain. The immediate electron acceptor for the enzyme in this species is believed to be ubiquinone. Couples the redox reaction to proton translocation (for every two electrons transferred, four hydrogen ions are translocated across the cytoplasmic membrane), and thus conserves the redox energy in a proton gradient. In Helicobacter pylori (strain P12), this protein is NADH-quinone oxidoreductase subunit D.